The chain runs to 1471 residues: Myosin-4 (1471 aa).

Residues 4 to 57 (EVGTKCWYPHKEQGWIGGEVTKNDFFEGTFHLELKLEDGETVSIETNSFENDDD) form the Myosin N-terminal SH3-like domain. Positions 71–777 (ESTDDLTTLS…MLAFLEKLRT (707 aa)) constitute a Myosin motor domain. Position 165–172 (165–172 (GESGAGKT)) interacts with ATP. Residues 647-669 (LGELMAIINSTNVHYIRCIKPNS) form an actin-binding region. 5 IQ domains span residues 781-801 (NEICIIIQKKIRARYYRLQYL), 804-824 (MESIKKCQSQIRSLLVRTRVD), 829-849 (TRAAILLQTNIRALWKREYYR), 876-898 (MLMAAVIIQSYIRSYGHKTDYRT), and 899-928 (LKRSSILVQSAMRMQLARRRYIVLQKEVEE). A coiled-coil region spans residues 938 to 1063 (GLLEEAIEFK…LAFIENVIAQ (126 aa)). Residues 1164 to 1419 (SKVLLTVESI…LNYLANVIKR (256 aa)) form the Dilute domain.

The protein belongs to the TRAFAC class myosin-kinesin ATPase superfamily. Myosin family. As to quaternary structure, interacts with SHE2 and SHE3.

It localises to the bud. In terms of biological role, part of the mRNA localization machinery that restricts accumulation of certain proteins to the bud and in the daughter cell. Recruited to specific mRNAs including the ASH1 mRNA, coding for a repressor of the HO endonuclease, via its interaction with SHE3. The protein is Myosin-4 (MYO4) of Saccharomyces cerevisiae (strain ATCC 204508 / S288c) (Baker's yeast).